We begin with the raw amino-acid sequence, 140 residues long: Lysozyme E (140 aa).

The signal sequence occupies residues 1–18; that stretch reads MKAFIVLVALAMAAPALG. One can recognise a C-type lysozyme domain in the interval 19 to 140; it reads RTLDRCSLAR…GWLPSIDGCF (122 aa). Intrachain disulfides connect C24/C139, C45/C129, C80/C96, and C92/C110. Catalysis depends on residues E50 and D68.

The protein belongs to the glycosyl hydrolase 22 family. As to expression, found in the midgut.

The catalysed reaction is Hydrolysis of (1-&gt;4)-beta-linkages between N-acetylmuramic acid and N-acetyl-D-glucosamine residues in a peptidoglycan and between N-acetyl-D-glucosamine residues in chitodextrins.. In terms of biological role, unlikely to play an active role in the humoral immune defense. May have a function in the digestion of bacteria in the food. The chain is Lysozyme E (LysE) from Drosophila melanogaster (Fruit fly).